The following is a 312-amino-acid chain: Olfactory receptor 14C36 (312 aa).

Residues 1–23 lie on the Extracellular side of the membrane; sequence MPNSTTVMEFLLMRFSDVWTLQI. A glycan (N-linked (GlcNAc...) asparagine) is linked at Asn-3. The chain crosses the membrane as a helical span at residues 24–44; the sequence is LHSASFFMLYLVTLMGNILIV. The Cytoplasmic segment spans residues 45 to 52; sequence TVTTCDSS. The helical transmembrane segment at 53–73 threads the bilayer; the sequence is LHMPMYFFLRNLSILDACYIS. Over 74-97 the chain is Extracellular; it reads VTVPTSCVNSLLDSTTISKAGCVA. Cys-95 and Cys-187 are oxidised to a cystine. The helical transmembrane segment at 98–118 threads the bilayer; sequence QVFLVVFFVYVELLFLTIMAH. Residues 119–137 lie on the Cytoplasmic side of the membrane; that stretch reads DRYVAVCQPLHYPVIVNSR. A helical transmembrane segment spans residues 138 to 158; sequence ICIQMTLASLLSGLVYAGMHT. At 159–194 the chain is on the extracellular side; sequence GSTFQLPFCRSNVIHQFFCDIPSLLKLSCSDTFSNE. Residues 195–215 form a helical membrane-spanning segment; it reads VMIVVSALGVGGGCFIFIIRS. At 216 to 235 the chain is on the cytoplasmic side; it reads YIHIFSTVLGFPRGADRTKA. The chain crosses the membrane as a helical span at residues 236–256; that stretch reads FSTCIPHILVVSVFLSSCSSV. At 257–269 the chain is on the extracellular side; sequence YLRPPAIPAATQD. Residues 270–290 traverse the membrane as a helical segment; sequence LILSGFYSIMPPLFNPIIYSL. Residues 291–312 are Cytoplasmic-facing; it reads RNKQIKVAIKKIMKRIFYSENV.

Belongs to the G-protein coupled receptor 1 family.

It is found in the cell membrane. Odorant receptor. The protein is Olfactory receptor 14C36 (OR14C36) of Homo sapiens (Human).